The chain runs to 829 residues: Venom phosphodiesterase CdcPDE (829 aa).

SMB domains follow at residues 8–51 and 52–96; these read PQVS…VLPT and QSWS…GETS. 16 disulfides stabilise this stretch: Cys-12–Cys-16, Cys-12–Cys-29, Cys-16–Cys-47, Cys-27–Cys-29, Cys-27–Cys-40, Cys-33–Cys-39, Cys-40–Cys-47, Cys-56–Cys-61, Cys-56–Cys-73, Cys-61–Cys-91, Cys-71–Cys-73, Cys-71–Cys-84, Cys-77–Cys-83, Cys-84–Cys-91, Cys-102–Cys-148, and Cys-110–Cys-322. The N-linked (GlcNAc...) asparagine glycan is linked to Asn-17. Positions 36–38 match the Cell attachment site motif; it reads RQA. Asp-125 and Thr-163 together coordinate a divalent metal cation. The active-site AMP-threonine intermediate is the Thr-163. N-linked (GlcNAc...) asparagine glycosylation is found at Asn-194 and Asn-237. Lys-249 lines the AMP pocket. 4 residues coordinate a divalent metal cation: Asp-283, His-287, Asp-330, and His-331. Residue His-287 participates in AMP binding. 6 cysteine pairs are disulfide-bonded: Cys-338/Cys-435, Cys-386/Cys-771, Cys-519/Cys-577, Cys-532/Cys-632, Cys-534/Cys-617, and Cys-740/Cys-750. Asn-383 carries an N-linked (GlcNAc...) asparagine glycan. A divalent metal cation is bound at residue His-440. Asn-572 and Asn-652 each carry an N-linked (GlcNAc...) asparagine glycan.

This sequence belongs to the nucleotide pyrophosphatase/phosphodiesterase family. In terms of assembly, monomer. Requires a divalent metal cation as cofactor. N-glycosylated. Glycosylation counts for an increased mass of ~9%. In terms of processing, contains 16 disulfide bonds. Expressed by venom gland.

It is found in the secreted. It catalyses the reaction ADP + H2O = AMP + phosphate + H(+). Hydrolyzes ADP with high activity. Shows weak or no activity on 5'-AMP, 5'-GMP, 3'-AMP, ATP, cAMP, and cGMP. Is devoid of monophosphatase and proteinase activities. Inhibits ADP-induced platelet aggregation and is cytotoxic to human keratinocytes. Kinetic parameters indicated a higher affinity for the substrate bis(p-nitrophenyl) phosphate compared to others snake venom PDEs. Is recognized by the crotalid antivenom produced by the Instituto Butantan. The protein is Venom phosphodiesterase CdcPDE of Crotalus durissus collilineatus (Brazilian rattlesnake).